A 274-amino-acid chain; its full sequence is Thiamine kinase (274 aa).

This sequence belongs to the thiamine kinase family.

The catalysed reaction is thiamine + ATP = thiamine phosphate + ADP + H(+). It participates in cofactor biosynthesis; thiamine diphosphate biosynthesis; thiamine phosphate from thiamine: step 1/1. Functionally, catalyzes the ATP-dependent phosphorylation of thiamine to thiamine phosphate. Is involved in thiamine salvage. This is Thiamine kinase from Escherichia coli O9:H4 (strain HS).